Reading from the N-terminus, the 445-residue chain is Exodeoxyribonuclease 7 large subunit (445 aa).

The protein belongs to the XseA family. Heterooligomer composed of large and small subunits.

The protein resides in the cytoplasm. The enzyme catalyses Exonucleolytic cleavage in either 5'- to 3'- or 3'- to 5'-direction to yield nucleoside 5'-phosphates.. Bidirectionally degrades single-stranded DNA into large acid-insoluble oligonucleotides, which are then degraded further into small acid-soluble oligonucleotides. The polypeptide is Exodeoxyribonuclease 7 large subunit (Xanthomonas axonopodis pv. citri (strain 306)).